A 432-amino-acid chain; its full sequence is Enolase (432 aa).

Gln167 contacts (2R)-2-phosphoglycerate. The active-site Proton donor is the Glu209. Mg(2+) contacts are provided by Asp246, Glu289, and Asp316. Lys341, Arg370, Ser371, and Lys392 together coordinate (2R)-2-phosphoglycerate. Lys341 serves as the catalytic Proton acceptor.

The protein belongs to the enolase family. It depends on Mg(2+) as a cofactor.

Its subcellular location is the cytoplasm. The protein localises to the secreted. It localises to the cell surface. The enzyme catalyses (2R)-2-phosphoglycerate = phosphoenolpyruvate + H2O. Its pathway is carbohydrate degradation; glycolysis; pyruvate from D-glyceraldehyde 3-phosphate: step 4/5. Its function is as follows. Catalyzes the reversible conversion of 2-phosphoglycerate (2-PG) into phosphoenolpyruvate (PEP). It is essential for the degradation of carbohydrates via glycolysis. This Petrotoga mobilis (strain DSM 10674 / SJ95) protein is Enolase.